Here is a 296-residue protein sequence, read N- to C-terminus: ATP synthase gamma chain (296 aa).

It belongs to the ATPase gamma chain family. F-type ATPases have 2 components, CF(1) - the catalytic core - and CF(0) - the membrane proton channel. CF(1) has five subunits: alpha(3), beta(3), gamma(1), delta(1), epsilon(1). CF(0) has three main subunits: a, b and c.

It is found in the cell inner membrane. Its function is as follows. Produces ATP from ADP in the presence of a proton gradient across the membrane. The gamma chain is believed to be important in regulating ATPase activity and the flow of protons through the CF(0) complex. This is ATP synthase gamma chain from Methylorubrum extorquens (strain PA1) (Methylobacterium extorquens).